We begin with the raw amino-acid sequence, 811 residues long: Phenylalanine--tRNA ligase beta subunit (811 aa).

The 117-residue stretch at 40–156 folds into the tRNA-binding domain; it reads AEKNENIVVG…EDIEVGSKVD (117 aa). In terms of domain architecture, B5 spans 411–486; sequence KSTKEVKVPL…RIHGYDHLPY (76 aa). Mg(2+) is bound by residues Asp-464, Asp-470, Glu-473, and Glu-474. Residues 717 to 810 enclose the FDX-ACB domain; it reads PRYPSVSRDI…VNKKFGSYVR (94 aa).

This sequence belongs to the phenylalanyl-tRNA synthetase beta subunit family. Type 1 subfamily. As to quaternary structure, tetramer of two alpha and two beta subunits. Requires Mg(2+) as cofactor.

It localises to the cytoplasm. The catalysed reaction is tRNA(Phe) + L-phenylalanine + ATP = L-phenylalanyl-tRNA(Phe) + AMP + diphosphate + H(+). This is Phenylalanine--tRNA ligase beta subunit from Oceanobacillus iheyensis (strain DSM 14371 / CIP 107618 / JCM 11309 / KCTC 3954 / HTE831).